The chain runs to 507 residues: Cytochrome P450 52A7 (507 aa).

The helical transmembrane segment at 6-26 threads the bilayer; it reads LHYWYYVLPAFIIFHWIVSAI. C456 contacts heme.

The protein belongs to the cytochrome P450 family. Requires heme as cofactor.

It is found in the membrane. Together with an NADPH cytochrome P450 the enzyme system catalyzes the terminal hydroxylation as the first step in the assimilation of alkanes and fatty acids. Preferentially hydroxylates lauric acid. This chain is Cytochrome P450 52A7 (CYP52A7), found in Candida tropicalis (Yeast).